Consider the following 491-residue polypeptide: Probable glycine dehydrogenase (decarboxylating) subunit 2 (491 aa).

Lysine 273 bears the N6-(pyridoxal phosphate)lysine mark.

It belongs to the GcvP family. C-terminal subunit subfamily. The glycine cleavage system is composed of four proteins: P, T, L and H. In this organism, the P 'protein' is a heterodimer of two subunits. Pyridoxal 5'-phosphate is required as a cofactor.

It catalyses the reaction N(6)-[(R)-lipoyl]-L-lysyl-[glycine-cleavage complex H protein] + glycine + H(+) = N(6)-[(R)-S(8)-aminomethyldihydrolipoyl]-L-lysyl-[glycine-cleavage complex H protein] + CO2. Functionally, the glycine cleavage system catalyzes the degradation of glycine. The P protein binds the alpha-amino group of glycine through its pyridoxal phosphate cofactor; CO(2) is released and the remaining methylamine moiety is then transferred to the lipoamide cofactor of the H protein. The polypeptide is Probable glycine dehydrogenase (decarboxylating) subunit 2 (Bacillus cereus (strain AH187)).